Reading from the N-terminus, the 613-residue chain is Vitamin B12 transporter BtuB (613 aa).

The N-terminal stretch at 1–22 (MQKSLLAIAMASLLTPISYLHA) is a signal peptide. Positions 29–36 (DTVVVTAN) match the TonB box motif. The TBDR plug domain occupies 41 to 154 (VESSVLASIS…IGGVIHIKTI (114 aa)). Residues 159–613 (QTKHDANLGY…NWFATVNYRF (455 aa)) form the TBDR beta-barrel domain. The TonB C-terminal box motif lies at 591 to 613 (HSSGGKYYVGEGRNWFATVNYRF).

The protein belongs to the TonB-dependent receptor family. BtuB (TC 1.B.14.3.1) subfamily.

It localises to the cell outer membrane. Its function is as follows. Involved in the active translocation of vitamin B12 (cyanocobalamin) across the outer membrane to the periplasmic space. It derives its energy for transport by interacting with the trans-periplasmic membrane protein TonB. In Vibrio vulnificus (strain YJ016), this protein is Vitamin B12 transporter BtuB.